The sequence spans 269 residues: Interleukin-1 beta (269 aa).

The propeptide occupies 1-116 (MAEVPELASE…TRNNDACVHD (116 aa)).

It belongs to the IL-1 family. Monomer. In its precursor form, weakly interacts with full-length MEFV; the mature cytokine does not interact at all. Interacts with integrins ITGAV:ITGBV and ITGA5:ITGB1; integrin-binding is required for IL1B signaling. Interacts with cargo receptor TMED10; the interaction is direct and is required for the secretion of IL1B mature form. Interacts with HSP90AB1; the interaction facilitates cargo translocation into the ERGIC. Interacts with HSP90B1; the interaction facilitates cargo translocation into the ERGIC.

It is found in the cytoplasm. The protein localises to the cytosol. The protein resides in the secreted. It localises to the lysosome. Its subcellular location is the extracellular exosome. Its function is as follows. Potent pro-inflammatory cytokine. Initially discovered as the major endogenous pyrogen, induces prostaglandin synthesis, neutrophil influx and activation, T-cell activation and cytokine production, B-cell activation and antibody production, and fibroblast proliferation and collagen production. Promotes Th17 differentiation of T-cells. Synergizes with IL12/interleukin-12 to induce IFNG synthesis from T-helper 1 (Th1) cells. Plays a role in angiogenesis by inducing VEGF production synergistically with TNF and IL6. Involved in transduction of inflammation downstream of pyroptosis: its mature form is specifically released in the extracellular milieu by passing through the gasdermin-D (GSDMD) pore. This Macaca nemestrina (Pig-tailed macaque) protein is Interleukin-1 beta (IL1B).